The primary structure comprises 111 residues: Large ribosomal subunit protein P1 (111 aa).

The span at serine 65–alanine 89 shows a compositional bias: low complexity. The disordered stretch occupies residues serine 65 to aspartate 111.

This sequence belongs to the eukaryotic ribosomal protein P1/P2 family. In terms of assembly, P1 and P2 exist as dimers at the large ribosomal subunit.

Functionally, plays an important role in the elongation step of protein synthesis. The sequence is that of Large ribosomal subunit protein P1 from Caenorhabditis elegans.